Here is a 474-residue protein sequence, read N- to C-terminus: tRNA-2-methylthio-N(6)-dimethylallyladenosine synthase (474 aa).

Residues 3-120 (KKLHIKTWGC…LPEMINSVRG (118 aa)) form the MTTase N-terminal domain. Positions 12, 49, 83, 157, 161, and 164 each coordinate [4Fe-4S] cluster. In terms of domain architecture, Radical SAM core spans 143–375 (RAEGPTAFVS…QERINQQAMA (233 aa)). A TRAM domain is found at 378–441 (RRMLGTTQRI…PNSLRGKVVR (64 aa)).

Belongs to the methylthiotransferase family. MiaB subfamily. Monomer. [4Fe-4S] cluster serves as cofactor.

Its subcellular location is the cytoplasm. The catalysed reaction is N(6)-dimethylallyladenosine(37) in tRNA + (sulfur carrier)-SH + AH2 + 2 S-adenosyl-L-methionine = 2-methylsulfanyl-N(6)-dimethylallyladenosine(37) in tRNA + (sulfur carrier)-H + 5'-deoxyadenosine + L-methionine + A + S-adenosyl-L-homocysteine + 2 H(+). Its function is as follows. Catalyzes the methylthiolation of N6-(dimethylallyl)adenosine (i(6)A), leading to the formation of 2-methylthio-N6-(dimethylallyl)adenosine (ms(2)i(6)A) at position 37 in tRNAs that read codons beginning with uridine. The protein is tRNA-2-methylthio-N(6)-dimethylallyladenosine synthase of Salmonella enteritidis PT4 (strain P125109).